A 648-amino-acid chain; its full sequence is Threonine--tRNA ligase (648 aa).

The 62-residue stretch at 1–62 (MVEIILPDGS…PHGAQVAIIT (62 aa)) folds into the TGS domain. A catalytic region spans residues 243 to 536 (DHRRIGKDLD…LVEHYAGWFP (294 aa)). Residues Cys-336, His-387, and His-513 each coordinate Zn(2+).

Belongs to the class-II aminoacyl-tRNA synthetase family. In terms of assembly, homodimer. It depends on Zn(2+) as a cofactor.

It is found in the cytoplasm. It catalyses the reaction tRNA(Thr) + L-threonine + ATP = L-threonyl-tRNA(Thr) + AMP + diphosphate + H(+). In terms of biological role, catalyzes the attachment of threonine to tRNA(Thr) in a two-step reaction: L-threonine is first activated by ATP to form Thr-AMP and then transferred to the acceptor end of tRNA(Thr). Also edits incorrectly charged L-seryl-tRNA(Thr). This chain is Threonine--tRNA ligase, found in Magnetococcus marinus (strain ATCC BAA-1437 / JCM 17883 / MC-1).